The following is a 436-amino-acid chain: 3-ketoacyl-CoA thiolase (436 aa).

The active-site Acyl-thioester intermediate is Cys-99. Active-site proton acceptor residues include His-392 and Cys-422.

The protein belongs to the thiolase-like superfamily. Thiolase family. As to quaternary structure, heterotetramer of two alpha chains (FadJ) and two beta chains (FadI).

It is found in the cytoplasm. The catalysed reaction is an acyl-CoA + acetyl-CoA = a 3-oxoacyl-CoA + CoA. Its pathway is lipid metabolism; fatty acid beta-oxidation. Catalyzes the final step of fatty acid oxidation in which acetyl-CoA is released and the CoA ester of a fatty acid two carbons shorter is formed. The chain is 3-ketoacyl-CoA thiolase from Shewanella putrefaciens (strain CN-32 / ATCC BAA-453).